A 162-amino-acid polypeptide reads, in one-letter code: MLNIVLFEPEIPPNTGNIIRLCANTGFQLHLIQPLGFTWDDKRLRRAGLDYHEFANIKQHHDYHSFLENEGVTGESFARLFALTTKGTPAHSAVSYQAGDYLMFGPETRGLPSYVLDNMPPQQKIRIPMLADSRSMNLSNSVAVVVFEAWRQLGYSGALLKE.

Residues L83, G105, I127, and S135 each coordinate S-adenosyl-L-methionine.

This sequence belongs to the class IV-like SAM-binding methyltransferase superfamily. RNA methyltransferase TrmH family. TrmL subfamily. In terms of assembly, homodimer.

The protein resides in the cytoplasm. The enzyme catalyses cytidine(34) in tRNA + S-adenosyl-L-methionine = 2'-O-methylcytidine(34) in tRNA + S-adenosyl-L-homocysteine + H(+). The catalysed reaction is 5-carboxymethylaminomethyluridine(34) in tRNA(Leu) + S-adenosyl-L-methionine = 5-carboxymethylaminomethyl-2'-O-methyluridine(34) in tRNA(Leu) + S-adenosyl-L-homocysteine + H(+). In terms of biological role, methylates the ribose at the nucleotide 34 wobble position in the two leucyl isoacceptors tRNA(Leu)(CmAA) and tRNA(Leu)(cmnm5UmAA). Catalyzes the methyl transfer from S-adenosyl-L-methionine to the 2'-OH of the wobble nucleotide. The chain is tRNA (cytidine(34)-2'-O)-methyltransferase from Photorhabdus asymbiotica subsp. asymbiotica (strain ATCC 43949 / 3105-77) (Xenorhabdus luminescens (strain 2)).